The primary structure comprises 125 residues: Large ribosomal subunit protein bL12 (125 aa).

It belongs to the bacterial ribosomal protein bL12 family. In terms of assembly, homodimer. Part of the ribosomal stalk of the 50S ribosomal subunit. Forms a multimeric L10(L12)X complex, where L10 forms an elongated spine to which 2 to 4 L12 dimers bind in a sequential fashion. Binds GTP-bound translation factors.

In terms of biological role, forms part of the ribosomal stalk which helps the ribosome interact with GTP-bound translation factors. Is thus essential for accurate translation. This chain is Large ribosomal subunit protein bL12, found in Mannheimia succiniciproducens (strain KCTC 0769BP / MBEL55E).